A 412-amino-acid polypeptide reads, in one-letter code: 8-amino-7-oxononanoate synthase (412 aa).

Residue 106–107 (GY) coordinates pyridoxal 5'-phosphate. His131 is a substrate binding site. Residues Ser187, His219, and Thr247 each contribute to the pyridoxal 5'-phosphate site. Lys250 is modified (N6-(pyridoxal phosphate)lysine). Thr370 serves as a coordination point for substrate.

The protein belongs to the class-II pyridoxal-phosphate-dependent aminotransferase family. BioF subfamily. Homodimer. Pyridoxal 5'-phosphate is required as a cofactor.

It catalyses the reaction 6-carboxyhexanoyl-[ACP] + L-alanine + H(+) = (8S)-8-amino-7-oxononanoate + holo-[ACP] + CO2. The protein operates within cofactor biosynthesis; biotin biosynthesis. In terms of biological role, 8-amino-7-oxononanoate synthase; part of the cluster involved in the biosynthesis of biotin (also known as vitamin B8 or vitamin H), a water-soluble vitamin that functions as a prosthetic group of many carboxylases, such as acetyl-CoA carboxylase and pyruvate carboxylase. Catalyzes the decarboxylative condensation of pimeloyl-[acyl-carrier protein] and L-alanine to produce 8-amino-7-oxononanoate (AON). The sequence is that of 8-amino-7-oxononanoate synthase from Emericella nidulans (strain FGSC A4 / ATCC 38163 / CBS 112.46 / NRRL 194 / M139) (Aspergillus nidulans).